The following is a 141-amino-acid chain: D-aminoacyl-tRNA deacylase (141 aa).

The Gly-cisPro motif, important for rejection of L-amino acids motif lies at 133–134; sequence GP.

The protein belongs to the DTD family. In terms of assembly, homodimer.

It localises to the cytoplasm. It carries out the reaction glycyl-tRNA(Ala) + H2O = tRNA(Ala) + glycine + H(+). It catalyses the reaction a D-aminoacyl-tRNA + H2O = a tRNA + a D-alpha-amino acid + H(+). An aminoacyl-tRNA editing enzyme that deacylates mischarged D-aminoacyl-tRNAs. Also deacylates mischarged glycyl-tRNA(Ala), protecting cells against glycine mischarging by AlaRS. Acts via tRNA-based rather than protein-based catalysis; rejects L-amino acids rather than detecting D-amino acids in the active site. By recycling D-aminoacyl-tRNA to D-amino acids and free tRNA molecules, this enzyme counteracts the toxicity associated with the formation of D-aminoacyl-tRNA entities in vivo and helps enforce protein L-homochirality. In Beutenbergia cavernae (strain ATCC BAA-8 / DSM 12333 / CCUG 43141 / JCM 11478 / NBRC 16432 / NCIMB 13614 / HKI 0122), this protein is D-aminoacyl-tRNA deacylase.